The primary structure comprises 276 residues: NH(3)-dependent NAD(+) synthetase (276 aa).

43–50 (GISGGVDS) lines the ATP pocket. D49 provides a ligand contact to Mg(2+). R146 provides a ligand contact to deamido-NAD(+). Residue T166 participates in ATP binding. E171 lines the Mg(2+) pocket. 2 residues coordinate deamido-NAD(+): K179 and D186. K195 and T217 together coordinate ATP. 266 to 267 (HK) contributes to the deamido-NAD(+) binding site.

It belongs to the NAD synthetase family. Homodimer.

The catalysed reaction is deamido-NAD(+) + NH4(+) + ATP = AMP + diphosphate + NAD(+) + H(+). Its pathway is cofactor biosynthesis; NAD(+) biosynthesis; NAD(+) from deamido-NAD(+) (ammonia route): step 1/1. Its function is as follows. Catalyzes the ATP-dependent amidation of deamido-NAD to form NAD. Uses ammonia as a nitrogen source. This is NH(3)-dependent NAD(+) synthetase from Shewanella putrefaciens (strain CN-32 / ATCC BAA-453).